The following is a 461-amino-acid chain: Type IV secretion system protein PtlD homolog (461 aa).

The first 24 residues, 1 to 24 (MAGLSRILLSCTLACLLAGQAAQA), serve as a signal peptide directing secretion. 5 helical membrane-spanning segments follow: residues 118-138 (LQPLVYSMMTLLVLLTGYALL), 232-252 (WLLCAMIVAASAGGWLCLAAS), 253-273 (LLIVPGLIVTLLLSLGPLFLV), 294-314 (ALVFMALGTPAVGLLSDVLAG), and 333-353 (MLAATLCATATLMLLTLVPLA). Low complexity predominate over residues 376-411 (AHRQAAARQYAPRPAAAAAAAGPHQAGTYAASATPA). The disordered stretch occupies residues 376 to 461 (AHRQAAARQY…RVLPRKPNLP (86 aa)). Over residues 439-453 (VRRDDRPAPAPDRRV) the composition is skewed to basic and acidic residues.

The protein localises to the cell membrane. This chain is Type IV secretion system protein PtlD homolog (ptlD), found in Bordetella bronchiseptica (strain ATCC BAA-588 / NCTC 13252 / RB50) (Alcaligenes bronchisepticus).